The primary structure comprises 258 residues: Imidazole glycerol phosphate synthase subunit HisF (258 aa).

Residues Asp11 and Asp130 contribute to the active site.

Belongs to the HisA/HisF family. As to quaternary structure, heterodimer of HisH and HisF.

The protein resides in the cytoplasm. It catalyses the reaction 5-[(5-phospho-1-deoxy-D-ribulos-1-ylimino)methylamino]-1-(5-phospho-beta-D-ribosyl)imidazole-4-carboxamide + L-glutamine = D-erythro-1-(imidazol-4-yl)glycerol 3-phosphate + 5-amino-1-(5-phospho-beta-D-ribosyl)imidazole-4-carboxamide + L-glutamate + H(+). The protein operates within amino-acid biosynthesis; L-histidine biosynthesis; L-histidine from 5-phospho-alpha-D-ribose 1-diphosphate: step 5/9. Functionally, IGPS catalyzes the conversion of PRFAR and glutamine to IGP, AICAR and glutamate. The HisF subunit catalyzes the cyclization activity that produces IGP and AICAR from PRFAR using the ammonia provided by the HisH subunit. In Methylorubrum extorquens (strain CM4 / NCIMB 13688) (Methylobacterium extorquens), this protein is Imidazole glycerol phosphate synthase subunit HisF.